The sequence spans 408 residues: Acetylornithine aminotransferase (408 aa).

Pyridoxal 5'-phosphate contacts are provided by residues 107 to 108 and Phe141; that span reads GT. Arg144 lines the N(2)-acetyl-L-ornithine pocket. A pyridoxal 5'-phosphate-binding site is contributed by 227–230; that stretch reads DEIQ. Position 256 is an N6-(pyridoxal phosphate)lysine (Lys256). Thr284 is a binding site for N(2)-acetyl-L-ornithine. Thr285 is a pyridoxal 5'-phosphate binding site.

Belongs to the class-III pyridoxal-phosphate-dependent aminotransferase family. ArgD subfamily. As to quaternary structure, homodimer. It depends on pyridoxal 5'-phosphate as a cofactor.

Its subcellular location is the cytoplasm. It catalyses the reaction N(2)-acetyl-L-ornithine + 2-oxoglutarate = N-acetyl-L-glutamate 5-semialdehyde + L-glutamate. It participates in amino-acid biosynthesis; L-arginine biosynthesis; N(2)-acetyl-L-ornithine from L-glutamate: step 4/4. This Xanthomonas axonopodis pv. citri (strain 306) protein is Acetylornithine aminotransferase.